Reading from the N-terminus, the 366-residue chain is Carbamoyl phosphate synthase small chain (366 aa).

The segment at 1–172 (MYGILVLEDG…TYNAENEKTS (172 aa)) is CPSase. 3 residues coordinate L-glutamine: serine 45, glycine 220, and glycine 222. The region spanning 172 to 363 (SCVLIDCGVK…VELGIKFKAE (192 aa)) is the Glutamine amidotransferase type-1 domain. Residue cysteine 247 is the Nucleophile of the active site. The L-glutamine site is built by leucine 248, glutamine 251, asparagine 289, glycine 291, and phenylalanine 292. Catalysis depends on residues histidine 336 and glutamate 338.

This sequence belongs to the CarA family. Composed of two chains; the small (or glutamine) chain promotes the hydrolysis of glutamine to ammonia, which is used by the large (or ammonia) chain to synthesize carbamoyl phosphate. Tetramer of heterodimers (alpha,beta)4.

The enzyme catalyses hydrogencarbonate + L-glutamine + 2 ATP + H2O = carbamoyl phosphate + L-glutamate + 2 ADP + phosphate + 2 H(+). It carries out the reaction L-glutamine + H2O = L-glutamate + NH4(+). The protein operates within amino-acid biosynthesis; L-arginine biosynthesis; carbamoyl phosphate from bicarbonate: step 1/1. It functions in the pathway pyrimidine metabolism; UMP biosynthesis via de novo pathway; (S)-dihydroorotate from bicarbonate: step 1/3. Its function is as follows. Small subunit of the glutamine-dependent carbamoyl phosphate synthetase (CPSase). CPSase catalyzes the formation of carbamoyl phosphate from the ammonia moiety of glutamine, carbonate, and phosphate donated by ATP, constituting the first step of 2 biosynthetic pathways, one leading to arginine and/or urea and the other to pyrimidine nucleotides. The small subunit (glutamine amidotransferase) binds and cleaves glutamine to supply the large subunit with the substrate ammonia. The chain is Carbamoyl phosphate synthase small chain from Methanococcus maripaludis (strain C7 / ATCC BAA-1331).